The chain runs to 297 residues: Glycosylphosphatidylinositol anchor biosynthesis protein 11 (297 aa).

A compositionally biased stretch (low complexity) spans 1–18 (MTSASPSPLRAANAASSA). Residues 1-26 (MTSASPSPLRAANAASSAPVPPPAMK) form a disordered region. The next 2 helical transmembrane spans lie at 44–64 (SFVH…ALVA) and 76–96 (FLAL…GSVL). The tract at residues 97-140 (PSPPASPVSDGDEKEKEKEKEKEKEKEKRKLPLRAGKLPRKKNQ) is disordered. The span at 107-126 (GDEKEKEKEKEKEKEKEKRK) shows a compositional bias: basic and acidic residues. The span at 127–140 (LPLRAGKLPRKKNQ) shows a compositional bias: basic residues. Asn139 is a glycosylation site (N-linked (GlcNAc...) asparagine). 4 helical membrane passes run 157–177 (LILT…LFGA), 187–207 (VLCA…VHGV), 225–245 (VWGG…PIPL), and 253–273 (AFPI…SVVC).

This sequence belongs to the PIGF family.

It is found in the endoplasmic reticulum membrane. It participates in glycolipid biosynthesis; glycosylphosphatidylinositol-anchor biosynthesis. Acts in the GPI biosynthetic pathway between GlcNAc-PI synthesis and GPI transfer to protein. The chain is Glycosylphosphatidylinositol anchor biosynthesis protein 11 (gpi11) from Aspergillus fumigatus (strain ATCC MYA-4609 / CBS 101355 / FGSC A1100 / Af293) (Neosartorya fumigata).